The primary structure comprises 127 residues: Pleckstrin homology-like domain family A member 3 (127 aa).

One can recognise a PH domain in the interval 5-108; it reads KVMNDGYLEK…RFKNRVAVQT (104 aa).

This sequence belongs to the PHLDA3 family.

The protein localises to the cytoplasm. It localises to the membrane. Functionally, p53/tp53-regulated repressor of Akt/akt1 signaling. Represses akt1 by preventing akt1-binding to membrane lipids, thereby inhibiting akt1 translocation to the cellular membrane and activation. Contributes to p53/tp53-dependent apoptosis by repressing akt1 activity. Its direct transcription regulation by p53/tp53 may explain how p53/tp53 can negatively regulate akt1. May act as a tumor suppressor. The protein is Pleckstrin homology-like domain family A member 3 (phlda3) of Danio rerio (Zebrafish).